The sequence spans 448 residues: Homogentisate 1,2-dioxygenase (448 aa).

Catalysis depends on His-303, which acts as the Proton acceptor. The Fe cation site is built by His-346 and Glu-352. Residues Tyr-361 and His-382 each contribute to the homogentisate site. His-382 serves as a coordination point for Fe cation.

Belongs to the homogentisate dioxygenase family. In terms of assembly, hexamer; dimer of trimers. Fe cation is required as a cofactor.

It catalyses the reaction homogentisate + O2 = 4-maleylacetoacetate + H(+). Its pathway is amino-acid degradation; L-phenylalanine degradation; acetoacetate and fumarate from L-phenylalanine: step 4/6. Functionally, involved in the catabolism of homogentisate (2,5-dihydroxyphenylacetate or 2,5-OH-PhAc), a central intermediate in the degradation of phenylalanine and tyrosine. Catalyzes the oxidative ring cleavage of the aromatic ring of homogentisate to yield maleylacetoacetate. In Rhodopseudomonas palustris (strain BisB5), this protein is Homogentisate 1,2-dioxygenase.